Consider the following 355-residue polypeptide: MNGTEGINFYVPMSNKTGVVRSPFEYPQYYLAEPWKYRLVCCYIFFLISTGLPINLLTLLVTFKHKKLRQPLNYILVNLAVADLFMACFGFTVTFYTAWNGYFVFGPVGCAVEGFFATLGGQVALWSLVVLAIERYIVVCKPMGNFRFSATHAMMGIAFTWVMAFSCAAPPLFGWSRYMPEGMQCSCGPDYYTHNPDYHNESYVLYMFVIHFIIPVVVIFFSYGRLICKVREAAAQQQESATTQKAEKEVTRMVILMVLGFMLAWTPYAVVAFWIFTNKGADFTATLMAVPAFFSKSSSLYNPIIYVLMNKQFRNCMITTICCGKNPFGDEDVSSTVSQSKTEVSSVSSSQVSPA.

At 1–36 (MNGTEGINFYVPMSNKTGVVRSPFEYPQYYLAEPWK) the chain is on the extracellular side. Asn2 and Asn15 each carry an N-linked (GlcNAc...) asparagine glycan. A helical membrane pass occupies residues 37 to 61 (YRLVCCYIFFLISTGLPINLLTLLV). The Cytoplasmic portion of the chain corresponds to 62–73 (TFKHKKLRQPLN). Residues 74 to 99 (YILVNLAVADLFMACFGFTVTFYTAW) form a helical membrane-spanning segment. Topologically, residues 100–113 (NGYFVFGPVGCAVE) are extracellular. A disulfide bridge connects residues Cys110 and Cys187. Residues 114–133 (GFFATLGGQVALWSLVVLAI) form a helical membrane-spanning segment. The Cytoplasmic portion of the chain corresponds to 134–152 (ERYIVVCKPMGNFRFSATH). Residues 153–176 (AMMGIAFTWVMAFSCAAPPLFGWS) traverse the membrane as a helical segment. The Extracellular segment spans residues 177-202 (RYMPEGMQCSCGPDYYTHNPDYHNES). Residues 203–230 (YVLYMFVIHFIIPVVVIFFSYGRLICKV) traverse the membrane as a helical segment. At 231 to 252 (REAAAQQQESATTQKAEKEVTR) the chain is on the cytoplasmic side. Residues 253–276 (MVILMVLGFMLAWTPYAVVAFWIF) traverse the membrane as a helical segment. Topologically, residues 277-284 (TNKGADFT) are extracellular. The helical transmembrane segment at 285 to 309 (ATLMAVPAFFSKSSSLYNPIIYVLM) threads the bilayer. Position 296 is an N6-(retinylidene)lysine (Lys296). Over 310 to 355 (NKQFRNCMITTICCGKNPFGDEDVSSTVSQSKTEVSSVSSSQVSPA) the chain is Cytoplasmic.

Belongs to the G-protein coupled receptor 1 family. Opsin subfamily. Post-translationally, phosphorylated on some or all of the serine and threonine residues present in the C-terminal region. The color pigments are found in the cone photoreceptor cells.

It localises to the membrane. In terms of biological role, visual pigments are the light-absorbing molecules that mediate vision. They consist of an apoprotein, opsin, covalently linked to cis-retinal. This chain is Green-sensitive opsin (PRA1), found in Gallus gallus (Chicken).